Consider the following 222-residue polypeptide: 3-dehydroquinate dehydratase (222 aa).

3-dehydroquinate is bound by residues 29–31 (ELR) and Arg55. The active-site Proton donor/acceptor is His112. Lys139 serves as the catalytic Schiff-base intermediate with substrate. Residues Arg178, Ser199, and Gln203 each coordinate 3-dehydroquinate.

The protein belongs to the type-I 3-dehydroquinase family. Homodimer.

It catalyses the reaction 3-dehydroquinate = 3-dehydroshikimate + H2O. The protein operates within metabolic intermediate biosynthesis; chorismate biosynthesis; chorismate from D-erythrose 4-phosphate and phosphoenolpyruvate: step 3/7. Functionally, involved in the third step of the chorismate pathway, which leads to the biosynthesis of aromatic amino acids. Catalyzes the cis-dehydration of 3-dehydroquinate (DHQ) and introduces the first double bond of the aromatic ring to yield 3-dehydroshikimate. This chain is 3-dehydroquinate dehydratase, found in Dehalococcoides mccartyi (strain ATCC BAA-2100 / JCM 16839 / KCTC 5957 / BAV1).